Here is a 648-residue protein sequence, read N- to C-terminus: Threonine--tRNA ligase (648 aa).

Residues 1–61 (MIKITLPDGS…TTDGNLILYT (61 aa)) enclose the TGS domain. Residues 240 to 539 (DHRKLGKELE…LLEHTAGNFP (300 aa)) are catalytic. Zn(2+) contacts are provided by Cys335, His386, and His516.

This sequence belongs to the class-II aminoacyl-tRNA synthetase family. As to quaternary structure, homodimer. It depends on Zn(2+) as a cofactor.

Its subcellular location is the cytoplasm. It carries out the reaction tRNA(Thr) + L-threonine + ATP = L-threonyl-tRNA(Thr) + AMP + diphosphate + H(+). Functionally, catalyzes the attachment of threonine to tRNA(Thr) in a two-step reaction: L-threonine is first activated by ATP to form Thr-AMP and then transferred to the acceptor end of tRNA(Thr). Also edits incorrectly charged L-seryl-tRNA(Thr). In Flavobacterium johnsoniae (strain ATCC 17061 / DSM 2064 / JCM 8514 / BCRC 14874 / CCUG 350202 / NBRC 14942 / NCIMB 11054 / UW101) (Cytophaga johnsonae), this protein is Threonine--tRNA ligase.